A 109-amino-acid chain; its full sequence is COX assembly mitochondrial protein 2 (109 aa).

The CHCH domain maps to 10–54 (FHSCLDFINALDKCHQKEYYKRIFGLCNNEKDALNKCLKEASLNN). Short sequence motifs (cx9C motif) lie at residues 13-23 (CLDFINALDKC) and 36-46 (CNNEKDALNKC). 2 disulfides stabilise this stretch: cysteine 13/cysteine 46 and cysteine 23/cysteine 36.

The protein belongs to the CMC family. Interacts with CMC1.

It is found in the mitochondrion inner membrane. It localises to the mitochondrion intermembrane space. In terms of biological role, required for mitochondrial cytochrome c oxidase (COX) assembly and respiration. May be involved in copper trafficking and distribution to mitochondrial COX and SOD1. This is COX assembly mitochondrial protein 2 (CMC2) from Saccharomyces cerevisiae (strain ATCC 204508 / S288c) (Baker's yeast).